The following is a 1466-amino-acid chain: ABC transporter G family member 40 (1466 aa).

The segment at 1 to 21 is disordered; that stretch reads MSHRHHAALVASASGRSPSWG. The 274-residue stretch at 176–449 folds into the ABC transporter 1 domain; that stretch reads GLIGQFGSSN…FEASGFRCPQ (274 aa). 209-216 is an ATP binding site; that stretch reads GPPSSGKS. An ABC transmembrane type-2 1 domain is found at 527–740; that stretch reads ESLKAVLCRE…SQNAISINEF (214 aa). The next 6 membrane-spanning stretches (helical) occupy residues 545 to 565, 581 to 601, 633 to 653, 664 to 684, 690 to 710, and 776 to 796; these read FLYI…MTVF, FLGA…SELN, VPVS…VMGF, FLAF…LGAI, IAIS…GFVI, and FWLS…LYIL. Residues 821 to 831 show a composition bias toward basic and acidic residues; sequence YTETRNEEHRS. Residues 821–851 are disordered; that stretch reads YTETRNEEHRSRTSTTTSSIPTSANGEGNRP. The segment covering 833-843 has biased composition (low complexity); the sequence is TSTTTSSIPTS. Residues 865–1117 enclose the ABC transporter 2 domain; the sequence is LCFNHLNYYV…KLVEYFETIL (253 aa). 910 to 917 contributes to the ATP binding site; that stretch reads GVSGAGKT. Residues 1190-1404 enclose the ABC transmembrane type-2 2 domain; that stretch reads IQCVANLWKQ…TIYGVIASQF (215 aa). Helical transmembrane passes span 1209–1229, 1241–1261, 1297–1317, 1327–1347, 1355–1375, 1396–1416, and 1435–1455; these read YNSL…TVFW, LYNL…TNCM, FIYN…MIGY, FLFF…MLVA, ANIL…FLIF, IYGV…VPGG, and FLGY…LIFG.

It belongs to the ABC transporter superfamily. ABCG family. PDR (TC 3.A.1.205) subfamily.

It is found in the membrane. The protein is ABC transporter G family member 40 of Oryza sativa subsp. japonica (Rice).